The sequence spans 484 residues: Zinc metalloproteinase-disintegrin BlatH1 (484 aa).

An N-terminal signal peptide occupies residues 1 to 20; that stretch reads MIQVLLVTICLAALPYQGSS. A propeptide spanning residues 21 to 190 is cleaved from the precursor; the sequence is IILESGNVND…KKASQSNLTP (170 aa). Position 191 is a pyrrolidone carboxylic acid (Glu) (Glu-191). Residues 199–395 form the Peptidase M12B domain; sequence KYVELVIVAD…QNSQCILNEP (197 aa). Glu-202 serves as a coordination point for Ca(2+). N-linked (GlcNAc...) asparagine glycosylation is present at Asn-259. A Ca(2+)-binding site is contributed by Asp-286. An N-linked (GlcNAc...) asparagine glycan is attached at Asn-297. Cystine bridges form between Cys-310–Cys-390, Cys-350–Cys-374, and Cys-352–Cys-357. His-335 is a Zn(2+) binding site. The active site involves Glu-336. Residues His-339 and His-345 each contribute to the Zn(2+) site. A glycan (N-linked (GlcNAc...) asparagine) is linked at Asn-373. Cys-390, Asn-393, Val-405, Asn-408, Glu-412, Glu-415, and Asp-418 together coordinate Ca(2+). The Disintegrin domain occupies 403–484; that stretch reads PPVCGNEILE…GQSADCPSNG (82 aa). Cystine bridges form between Cys-406–Cys-425, Cys-417–Cys-435, Cys-419–Cys-430, Cys-429–Cys-452, Cys-443–Cys-449, Cys-448–Cys-473, and Cys-461–Cys-480. The short motif at 465–467 is the TDN-tripeptide element; sequence TDN.

The protein belongs to the venom metalloproteinase (M12B) family. P-II subfamily. P-IIc sub-subfamily. As to quaternary structure, homodimer. The cofactor is Zn(2+). In terms of processing, the N-terminus is blocked. In terms of tissue distribution, expressed by the venom gland.

It is found in the secreted. With respect to regulation, platelet aggregation in inhibited by the metalloproteinase inhibitors EDTA and Batimastat. The hemorrhagic activity is not inhibited by the plasma proteinase inhibitor alpha2-macroglobulin, although the SVMP is able to cleave this plasma inhibitor, generating a 90 kDa product. Its function is as follows. Snake venom zinc metalloprotease-disintegrin that hydrolyzes azocasein, gelatin and fibrinogen (Aalpha and Bbeta chains and partially gamma-chain), and exerts a potent local and systemic hemorrhagic activity in mice. It inhibits ADP- and collagen-induced human platelet aggregation (IC(50) = 0.3 uM and 0.7 uM for ADP and collagen, respectively). This inhibition is dependent of protease activity, and probably occurs through the degradation of an unknown platelet receptor. This is Zinc metalloproteinase-disintegrin BlatH1 from Bothriechis lateralis (Side-striped palm pitviper).